A 250-amino-acid chain; its full sequence is Formylaminopyrimidine transport permease protein ThiX (250 aa).

Transmembrane regions (helical) follow at residues 5–25 (YQAL…EISA), 62–82 (IISI…LLMF), 94–114 (LLVA…VLWF), 115–135 (GYSI…PITV), 172–192 (LPSF…GAAV), and 216–236 (PGVF…FAAI). One can recognise an ABC transmembrane type-1 domain in the interval 56-237 (LPATLAIISI…LGILGFAAIK (182 aa)).

Belongs to the binding-protein-dependent transport system permease family. The complex is likely composed of an ATP-binding protein (ThiZ), a transmembrane protein (ThiX) and a solute-binding protein (ThiY).

It is found in the cell membrane. Its pathway is cofactor biosynthesis; thiamine diphosphate biosynthesis. Participates in a thiamine pyrimidine salvage pathway as part of the ABC transporter complex ThiXYZ involved in the import of thiamine degradation products such as the formylaminopyrimidine N-formyl-4-amino-5-aminomethyl-2-methylpyrimidine (FAMP). Is probably responsible for the translocation of the substrate across the membrane. The protein is Formylaminopyrimidine transport permease protein ThiX of Halalkalibacterium halodurans (strain ATCC BAA-125 / DSM 18197 / FERM 7344 / JCM 9153 / C-125) (Bacillus halodurans).